The chain runs to 438 residues: Coenzyme A disulfide reductase (438 aa).

8–33 (GAVAGGATCASQIRRLDKESDIIIFE) contacts FAD. Substrate is bound by residues Thr15, Gln19, Arg22, Ser39, and Asn42. The active-site Nucleophile is Cys43. Cys43 functions as the Redox-active in the catalytic mechanism. Lys71 contacts substrate. 151–166 (VLVVGAGYVSLEVLEN) is a binding site for NADP(+). 267–277 (TNVPNIYAIGD) serves as a coordination point for FAD. Substrate is bound at residue His299. Residue Tyr419 participates in FAD binding. Residue Lys427 participates in substrate binding.

Belongs to the class-III pyridine nucleotide-disulfide oxidoreductase family. As to quaternary structure, homodimer. The cofactor is FAD.

The enzyme catalyses NADP(+) + 2 CoA = CoA-disulfide + NADPH + H(+). Its function is as follows. Catalyzes specifically the NADPH-dependent reduction of coenzyme A disulfide. The polypeptide is Coenzyme A disulfide reductase (Staphylococcus aureus (strain COL)).